The primary structure comprises 395 residues: MGSGIAAVLLSLAVALARVPAGEGEYVPVERSLTRVNPGRFRGAHLPPLEQKTDPPDVRRVYHVQPFVENPFQTPSVPVAVYYAVLERACRSVLLWAPTEAVQVVRGAPEATRSDARYNLTVAWYRTSDDCAIPILVMEYAECQYDKPLGACPVRNLPRWSFYDSFSATGDDDLGLLMHAPAFETAGTYVRLVKVNGWVEVTQFIFEHRGKGPCRYTLPLRILPAACLRAPVFEQGVTVDAIGMLPRFIPENQRIVAVYSLQAAGWHGPKAPFTSTLLPPEVVETANVTRPELAPEERGTSRTPGDEPAPAVAAQLPPNWHVPEASDVTIQGPAPAPSGHTGAVVGALAGAGLAAGVVVLAVYLVRRRGRAAGKHVRLPELLEEAHGPARRGAPY.

Residues 1 to 17 (MGSGIAAVLLSLAVALA) form the signal peptide. The Virion surface segment spans residues 18 to 342 (RVPAGEGEYV…PAPAPSGHTG (325 aa)). His-63 provides a ligand contact to Zn(2+). 3 disulfide bridges follow: Cys-90–Cys-214, Cys-131–Cys-227, and Cys-143–Cys-152. N-linked (GlcNAc...) asparagine; by host glycosylation is present at Asn-119. A Zn(2+)-binding site is contributed by Asp-240. Positions 261–306 (LQAAGWHGPKAPFTSTLLPPEVVETANVTRPELAPEERGTSRTPGD) are profusion. N-linked (GlcNAc...) asparagine; by host glycosylation is present at Asn-287. Residues 289-314 (TRPELAPEERGTSRTPGDEPAPAVAA) are disordered. A helical membrane pass occupies residues 343–362 (AVVGALAGAGLAAGVVVLAV). Residues 363–395 (YLVRRRGRAAGKHVRLPELLEEAHGPARRGAPY) are Intravirion-facing.

The protein belongs to the herpesviridae glycoprotein D family.

Its subcellular location is the virion membrane. Functionally, envelope glycoprotein that binds to host cell entry receptors, promoting the virus entry into host cells. May trigger fusion with host membrane, by recruiting the fusion machinery composed of gB and gH/gL. The chain is Envelope glycoprotein D (gD) from Cercopithecine herpesvirus 1 (CeHV-1).